The chain runs to 326 residues: DNA-directed RNA polymerase subunit alpha (326 aa).

The alpha N-terminal domain (alpha-NTD) stretch occupies residues 1 to 232 (MQGSARNFLK…EQLSSFVELE (232 aa)). The segment at 246-326 (FDPQLLAAVD…NWPPVDLMSE (81 aa)) is alpha C-terminal domain (alpha-CTD).

Belongs to the RNA polymerase alpha chain family. In terms of assembly, homodimer. The RNAP catalytic core consists of 2 alpha, 1 beta, 1 beta' and 1 omega subunit. When a sigma factor is associated with the core the holoenzyme is formed, which can initiate transcription.

The catalysed reaction is RNA(n) + a ribonucleoside 5'-triphosphate = RNA(n+1) + diphosphate. DNA-dependent RNA polymerase catalyzes the transcription of DNA into RNA using the four ribonucleoside triphosphates as substrates. In Ruthia magnifica subsp. Calyptogena magnifica, this protein is DNA-directed RNA polymerase subunit alpha.